The following is a 212-amino-acid chain: Pyridoxine/pyridoxamine 5'-phosphate oxidase (212 aa).

Substrate-binding positions include 8–11 (RREY) and K66. FMN is bound by residues 61–66 (RIVLLK), 76–77 (FT), R82, K83, and Q105. Substrate-binding residues include Y123, R127, and S131. FMN is bound by residues 140–141 (QS) and W185. 191–193 (RLH) is a binding site for substrate. R195 is an FMN binding site.

It belongs to the pyridoxamine 5'-phosphate oxidase family. As to quaternary structure, homodimer. Requires FMN as cofactor.

It carries out the reaction pyridoxamine 5'-phosphate + O2 + H2O = pyridoxal 5'-phosphate + H2O2 + NH4(+). It catalyses the reaction pyridoxine 5'-phosphate + O2 = pyridoxal 5'-phosphate + H2O2. The protein operates within cofactor metabolism; pyridoxal 5'-phosphate salvage; pyridoxal 5'-phosphate from pyridoxamine 5'-phosphate: step 1/1. It functions in the pathway cofactor metabolism; pyridoxal 5'-phosphate salvage; pyridoxal 5'-phosphate from pyridoxine 5'-phosphate: step 1/1. Functionally, catalyzes the oxidation of either pyridoxine 5'-phosphate (PNP) or pyridoxamine 5'-phosphate (PMP) into pyridoxal 5'-phosphate (PLP). This chain is Pyridoxine/pyridoxamine 5'-phosphate oxidase, found in Shewanella baltica (strain OS155 / ATCC BAA-1091).